Consider the following 355-residue polypeptide: MSVNYAAGLSPYADKGKCGLPEIFDPPEELERKVWELARLVWQSSSVVFHTGAGISTASGIPDFRGPHGVWTMEERGLAPKFDTTFESARPTQTHMALVQLERVGLLRFLVSQNVDGLHVRSGFPRDKLAELHGNMFVEECAKCKTQYVRDTVVGTMGLKATGRLCTVAKARGLRACRGELRDTILDWEDSLPDRDLALADEASRNADLSITLGTSLQIRPSGNLPLATKRRGGRLVIVNLQPTKHDRHADLRIHGYVDEVMTRLMKHLGLEIPAWDGPRVLERALPPLPRPPTPKLEPKEESPTRINGSIPAGPKQEPCAQHNGSEPASPKRERPTSPAPHRPPKRVKAKAVPS.

The residue at position 2 (Ser-2) is an N-acetylserine. Residue Ser-10 is modified to Phosphoserine; by MAPK8. Residues 27 to 272 (PEELERKVWE…TRLMKHLGLE (246 aa)) enclose the Deacetylase sirtuin-type domain. Lys-33 carries the N6-acetyllysine modification. NAD(+) is bound by residues Ala-53, Thr-57, Phe-64, Arg-65, Trp-71, Gln-113, and His-133. The Proton acceptor role is filled by His-133. Cys-141, Cys-144, and Cys-166 together coordinate Zn(2+). Lys-170 is covalently cross-linked (Glycyl lysine isopeptide (Lys-Gly) (interchain with G-Cter in ubiquitin)). Cys-177 lines the Zn(2+) pocket. The NAD(+) site is built by Gly-214, Ser-216, Asn-240, Gln-242, and Val-258. Residues 284–355 (RALPPLPRPP…KRVKAKAVPS (72 aa)) form a disordered region. Pro residues predominate over residues 287–296 (PPLPRPPTPK). The residue at position 294 (Thr-294) is a Phosphothreonine. 2 positions are modified to phosphoserine: Ser-303 and Ser-330. The segment covering 343-355 (RPPKRVKAKAVPS) has biased composition (basic residues).

This sequence belongs to the sirtuin family. Class IV subfamily. As to quaternary structure, homodimer; binds to nucleosomes and DNA ends as a homodimer. Interacts with RELA; interferes with RELA binding to target DNA. Interacts with SMARCA5; promoting recruitment of SMARCA5/SNF2H to double-strand breaks (DSBs) sites. Interacts with the mTORC2 complex; preventing the ability of SIRT6 to deacetylate FOXO1. Interacts with the CLOCK-BMAL1 complex; recruited by the CLOCK-BMAL1 complex to regulate expression of clock-controlled genes. Interacts with CSNK2A2; preventing CSNK2A2 localization to the nucleus. (Microbial infection) Interacts with Kaposi's sarcoma-associated herpesvirus protein VIRF-1; this interaction prevents SIRT6 deubiquitination by USP10. It depends on Zn(2+) as a cofactor. Post-translationally, acetylated at Lys-33. Deacetylation at Lys-33 by SIRT1 promotes homomultimerization and binding to double-strand breaks (DSBs) sites. Phosphorylation at Ser-10 by MAPK8/JNK1 in response to oxidative stress stimulates the mono-ADP-ribosyltransferase activity on PARP1, leading to PARP1 recruitment to double-strand breaks (DSBs). In terms of processing, monoubiquitinated at Lys-170 by STUB1/CHIP, preventing its degradation by the proteasome. Deubiquitinated by USP10, also preventing its degradation by the proteasome. Post-translationally, sumoylated, leading to specifically decrease ability to deacetylate histone H3 at 'Lys-56' (H3K56ac).

It localises to the nucleus. Its subcellular location is the chromosome. The protein resides in the telomere. The protein localises to the endoplasmic reticulum. The catalysed reaction is N(6)-acetyl-L-lysyl-[protein] + NAD(+) + H2O = 2''-O-acetyl-ADP-D-ribose + nicotinamide + L-lysyl-[protein]. It carries out the reaction N(6)-tetradecanoyl-L-lysyl-[protein] + NAD(+) + H2O = 2''-O-tetradecanoyl-ADP-D-ribose + nicotinamide + L-lysyl-[protein]. The enzyme catalyses N(6)-hexadecanoyl-L-lysyl-[protein] + NAD(+) + H2O = 2''-O-hexadecanoyl-ADP-D-ribose + nicotinamide + L-lysyl-[protein]. It catalyses the reaction L-lysyl-[protein] + NAD(+) = N(6)-(ADP-D-ribosyl)-L-lysyl-[protein] + nicotinamide + H(+). The catalysed reaction is L-arginyl-[protein] + NAD(+) = N(omega)-(ADP-D-ribosyl)-L-arginyl-[protein] + nicotinamide + H(+). Compared to the defatty-acylase activity, the protein deacetylase activity is weak in vitro, and requires activation. The histone deacetylase activity is strongly activated upon binding to nucleosomes and chromatin in vivo. Two molecules of SIRT6 associate with the acidic patch of one nucleosome, while the C-terminal disordered region of SIRT6 associates with nucleosomal DNA, leading to efficient histone deacetylation. The protein-lysine deacetylase activity is also activated by long-chain free fatty-acids. The histone deacetylase activity is specifically repressed by long non-coding RNA lncPRESS1, which binds to SIRT6 and prevents chromatin-binding, thereby promoting stem cell pluripotency. Due to its essential role as tumor suppressor and involvement in DNA repair and life span, extensive research is made for the identification of small compound regulators of SIRT6. Nitro-fatty acids (nitro-oleic acid and nitro-conjugated linoleic acid) strongly stimulate the protein-lysine deacetylase activity by forming a covalent Michael adduct formation with Cys-18. Activated by UBCS039 (4-(pyridin-3-yl)-4,5- dihydropyrrolo[1,2-a]quinoxaline). Inhibited by non-selective hydroxamate trichostatin A inhibitor. Deacetylase activity is activated by fluvastatin and quercetin-based compounds. The protein-lysine deacetylase activity, but not the defatty-acylase activity, is specifically activated by MDL-800 and MDL-801 activators in vivo, enhancing the histone deacetylase and tumor suppressor activities. MDL-800 and MDL-801 selectively activate SIRT6 and not other members of the sirtuin family. The binding-mode of MDL-801 is however subject to discussion. Functionally, NAD-dependent protein deacetylase, deacylase and mono-ADP-ribosyltransferase that plays an essential role in DNA damage repair, telomere maintenance, metabolic homeostasis, inflammation, tumorigenesis and aging. Displays protein-lysine deacetylase or defatty-acylase (demyristoylase and depalmitoylase) activity, depending on the context. Acts as a key histone deacetylase by catalyzing deacetylation of histone H3 at 'Lys-9', 'Lys-18' and 'Lys-56' (H3K9ac, H3K18ac and H3K56ac, respectively), suppressing target gene expression of several transcription factors, including NF-kappa-B. Acts as an inhibitor of transcription elongation by mediating deacetylation of H3K9ac and H3K56ac, preventing release of NELFE from chromatin and causing transcriptional pausing. Involved in DNA repair by promoting double-strand break (DSB) repair: acts as a DSB sensor by recognizing and binding DSB sites, leading to (1) recruitment of DNA repair proteins, such as SMARCA5/SNF2H, and (2) deacetylation of histone H3K9ac and H3K56ac. SIRT6 participation to DSB repair is probably involved in extension of life span. Also promotes DNA repair by deacetylating non-histone proteins, such as DDB2 and p53/TP53. Specifically deacetylates H3K18ac at pericentric heterochromatin, thereby maintaining pericentric heterochromatin silencing at centromeres and protecting against genomic instability and cellular senescence. Involved in telomere maintenance by catalyzing deacetylation of histone H3 in telomeric chromatin, regulating telomere position effect and telomere movement in response to DNA damage. Required for embryonic stem cell differentiation by mediating histone deacetylation of H3K9ac. Plays a major role in metabolism by regulating processes such as glycolysis, gluconeogenesis, insulin secretion and lipid metabolism. Inhibits glycolysis via histone deacetylase activity and by acting as a corepressor of the transcription factor HIF1A, thereby controlling the expression of multiple glycolytic genes. Has tumor suppressor activity by repressing glycolysis, thereby inhibiting the Warburg effect. Also regulates glycolysis and tumorigenesis by mediating deacetylation and nuclear export of non-histone proteins, such as isoform M2 of PKM (PKM2). Acts as a negative regulator of gluconeogenesis by mediating deacetylation of non-histone proteins, such as FOXO1 and KAT2A/GCN5. Promotes beta-oxidation of fatty acids during fasting by catalyzing deacetylation of NCOA2, inducing coactivation of PPARA. Acts as a regulator of lipid catabolism in brown adipocytes, both by catalyzing deacetylation of histones and non-histone proteins, such as FOXO1. Also acts as a regulator of circadian rhythms, both by regulating expression of clock-controlled genes involved in lipid and carbohydrate metabolism, and by catalyzing deacetylation of PER2. The defatty-acylase activity is specifically involved in regulation of protein secretion. Has high activity toward long-chain fatty acyl groups and mediates protein-lysine demyristoylation and depalmitoylation of target proteins, such as RRAS2 and TNF, thereby regulating their secretion. Also acts as a mono-ADP-ribosyltransferase by mediating mono-ADP-ribosylation of PARP1, TRIM28/KAP1 or SMARCC2/BAF170. Mono-ADP-ribosyltransferase activity is involved in DNA repair, cellular senescence, repression of LINE-1 retrotransposon elements and regulation of transcription. The sequence is that of NAD-dependent protein deacylase sirtuin-6 from Homo sapiens (Human).